The following is a 119-amino-acid chain: Large ribosomal subunit protein uL22 (119 aa).

This sequence belongs to the universal ribosomal protein uL22 family. In terms of assembly, part of the 50S ribosomal subunit.

Its function is as follows. This protein binds specifically to 23S rRNA; its binding is stimulated by other ribosomal proteins, e.g. L4, L17, and L20. It is important during the early stages of 50S assembly. It makes multiple contacts with different domains of the 23S rRNA in the assembled 50S subunit and ribosome. Functionally, the globular domain of the protein is located near the polypeptide exit tunnel on the outside of the subunit, while an extended beta-hairpin is found that lines the wall of the exit tunnel in the center of the 70S ribosome. The sequence is that of Large ribosomal subunit protein uL22 from Rickettsia felis (strain ATCC VR-1525 / URRWXCal2) (Rickettsia azadi).